The chain runs to 571 residues: Sulfite reductase [NADPH] hemoprotein beta-component (571 aa).

The [4Fe-4S] cluster site is built by cysteine 435, cysteine 441, cysteine 480, and cysteine 484. Siroheme is bound at residue cysteine 484.

The protein belongs to the nitrite and sulfite reductase 4Fe-4S domain family. Alpha(8)-beta(8). The alpha component is a flavoprotein, the beta component is a hemoprotein. Requires siroheme as cofactor. [4Fe-4S] cluster is required as a cofactor.

The catalysed reaction is hydrogen sulfide + 3 NADP(+) + 3 H2O = sulfite + 3 NADPH + 4 H(+). The protein operates within sulfur metabolism; hydrogen sulfide biosynthesis; hydrogen sulfide from sulfite (NADPH route): step 1/1. In terms of biological role, component of the sulfite reductase complex that catalyzes the 6-electron reduction of sulfite to sulfide. This is one of several activities required for the biosynthesis of L-cysteine from sulfate. The chain is Sulfite reductase [NADPH] hemoprotein beta-component from Erwinia tasmaniensis (strain DSM 17950 / CFBP 7177 / CIP 109463 / NCPPB 4357 / Et1/99).